Consider the following 382-residue polypeptide: Prophage ps2 probable integrase (382 aa).

The Core-binding (CB) domain occupies 63–142 (AKFTDIAEEW…TLNLIFDYAV (80 aa)). Positions 170–376 (IQNKYLEQNE…TENMKSSIID (207 aa)) constitute a Tyr recombinase domain. Catalysis depends on residues arginine 209, lysine 242, histidine 326, arginine 329, and histidine 352. Tyrosine 363 functions as the O-(3'-phospho-DNA)-tyrosine intermediate in the catalytic mechanism.

It belongs to the 'phage' integrase family.

The protein is Prophage ps2 probable integrase (ps201) of Lactococcus lactis subsp. lactis (strain IL1403) (Streptococcus lactis).